Here is a 440-residue protein sequence, read N- to C-terminus: Glutamate--tRNA ligase 1 (440 aa).

The 'HIGH' region motif lies at 7-17; that stretch reads PSPTGYLHVGN. The 'KMSKS' region motif lies at 238–242; sequence KISKR. An ATP-binding site is contributed by Lys-241.

The protein belongs to the class-I aminoacyl-tRNA synthetase family. Glutamate--tRNA ligase type 1 subfamily. In terms of assembly, monomer.

The protein localises to the cytoplasm. The enzyme catalyses tRNA(Glu) + L-glutamate + ATP = L-glutamyl-tRNA(Glu) + AMP + diphosphate. Functionally, catalyzes the attachment of glutamate to tRNA(Glu) in a two-step reaction: glutamate is first activated by ATP to form Glu-AMP and then transferred to the acceptor end of tRNA(Glu). The protein is Glutamate--tRNA ligase 1 of Wolbachia sp. subsp. Brugia malayi (strain TRS).